A 267-amino-acid chain; its full sequence is Trehalose-phosphate phosphatase (267 aa).

Residue Asp20 is the Nucleophile of the active site. Residues Asp20, Asp22, and Asp198 each coordinate Mg(2+). Residue Asp20–Asp22 participates in substrate binding.

This sequence belongs to the trehalose phosphatase family. It depends on Mg(2+) as a cofactor.

It catalyses the reaction alpha,alpha-trehalose 6-phosphate + H2O = alpha,alpha-trehalose + phosphate. It participates in glycan biosynthesis; trehalose biosynthesis. In terms of biological role, removes the phosphate from trehalose 6-phosphate to produce free trehalose. This is Trehalose-phosphate phosphatase (otsB) from Salmonella typhimurium (strain SL1344).